Reading from the N-terminus, the 62-residue chain is Conotoxin Tx5.1 (62 aa).

The first 22 residues, 1–22, serve as a signal peptide directing secretion; it reads MCCLPVFVILLLLIASAPSVDA. The propeptide occupies 23–49; the sequence is QPKTKDDVPLAPLHDNAKSALQHLNQR. Gln60 bears the Glutamine amide mark.

The protein belongs to the conotoxin T superfamily. Contains 2 disulfide bonds that can be either 'C1-C3, C2-C4' or 'C1-C4, C2-C3', since these disulfide connectivities have been observed for conotoxins with cysteine framework V (for examples, see AC P0DQQ7 and AC P81755). As to expression, expressed by the venom duct.

It localises to the secreted. This Conus textile (Cloth-of-gold cone) protein is Conotoxin Tx5.1.